A 98-amino-acid polypeptide reads, in one-letter code: NADH-ubiquinone oxidoreductase chain 4L (98 aa).

A run of 3 helical transmembrane segments spans residues 1–21, 29–49, and 61–81; these read MSMV…GLLM, SLLC…MTIL, and IILL…LVMV.

It belongs to the complex I subunit 4L family. In terms of assembly, core subunit of respiratory chain NADH dehydrogenase (Complex I) which is composed of 45 different subunits.

It is found in the mitochondrion inner membrane. It carries out the reaction a ubiquinone + NADH + 5 H(+)(in) = a ubiquinol + NAD(+) + 4 H(+)(out). Its function is as follows. Core subunit of the mitochondrial membrane respiratory chain NADH dehydrogenase (Complex I) which catalyzes electron transfer from NADH through the respiratory chain, using ubiquinone as an electron acceptor. Part of the enzyme membrane arm which is embedded in the lipid bilayer and involved in proton translocation. This Arctocephalus australis (South American fur seal) protein is NADH-ubiquinone oxidoreductase chain 4L (MT-ND4L).